We begin with the raw amino-acid sequence, 351 residues long: Protein Wnt-2b-A (351 aa).

An N-terminal signal peptide occupies residues 1–16 (MHFAYILILLILTPRV). 11 disulfides stabilise this stretch: cysteine 67/cysteine 78, cysteine 118/cysteine 126, cysteine 128/cysteine 148, cysteine 197/cysteine 211, cysteine 199/cysteine 206, cysteine 269/cysteine 300, cysteine 285/cysteine 295, cysteine 299/cysteine 339, cysteine 315/cysteine 330, cysteine 317/cysteine 327, and cysteine 322/cysteine 323. Residue asparagine 77 is glycosylated (N-linked (GlcNAc...) asparagine). The O-palmitoleoyl serine; by PORCN moiety is linked to residue serine 203.

Belongs to the Wnt family. Palmitoleoylation is required for efficient binding to frizzled receptors. Depalmitoleoylation leads to Wnt signaling pathway inhibition. As to expression, expressed maternally in both vegetal and animal blastomeres with enrichment in the animal hemisphere. Expressed zygotically near the prosencephalic-mesencephalic boundary of the developing brain in neurula and tailbud stages, and also in non-brain areas at tadpole stages.

Its subcellular location is the secreted. It localises to the extracellular space. The protein localises to the extracellular matrix. Ligand for members of the frizzled family of seven transmembrane receptors. Functions in the canonical Wnt/beta-catenin signaling pathway. The protein is Protein Wnt-2b-A (wnt2b-a) of Xenopus laevis (African clawed frog).